Reading from the N-terminus, the 40-residue chain is Probable non-specific lipid-transfer protein (40 aa).

Belongs to the plant LTP family. In terms of processing, phosphorylated by Ca(2+)-dependent protein kinase.

Its function is as follows. Plant non-specific lipid-transfer proteins transfer phospholipids as well as galactolipids across membranes. May play a role in wax or cutin deposition in the cell walls of expanding epidermal cells and certain secretory tissues. The sequence is that of Probable non-specific lipid-transfer protein from Triticum aestivum (Wheat).